Here is a 207-residue protein sequence, read N- to C-terminus: Peptidyl-tRNA hydrolase (207 aa).

Residue Tyr17 participates in tRNA binding. Residue His22 is the Proton acceptor of the active site. The tRNA site is built by Phe68, Asn70, and Asn116.

Belongs to the PTH family. As to quaternary structure, monomer.

It localises to the cytoplasm. The catalysed reaction is an N-acyl-L-alpha-aminoacyl-tRNA + H2O = an N-acyl-L-amino acid + a tRNA + H(+). Functionally, hydrolyzes ribosome-free peptidyl-tRNAs (with 1 or more amino acids incorporated), which drop off the ribosome during protein synthesis, or as a result of ribosome stalling. In terms of biological role, catalyzes the release of premature peptidyl moieties from peptidyl-tRNA molecules trapped in stalled 50S ribosomal subunits, and thus maintains levels of free tRNAs and 50S ribosomes. This Buchnera aphidicola subsp. Baizongia pistaciae (strain Bp) protein is Peptidyl-tRNA hydrolase.